A 195-amino-acid polypeptide reads, in one-letter code: Thymidylate kinase (195 aa).

Residue 7 to 14 (GIDGVGKS) participates in ATP binding.

Belongs to the thymidylate kinase family.

The enzyme catalyses dTMP + ATP = dTDP + ADP. Its function is as follows. Phosphorylation of dTMP to form dTDP in both de novo and salvage pathways of dTTP synthesis. This Campylobacter concisus (strain 13826) protein is Thymidylate kinase.